The following is a 234-amino-acid chain: Orotidine 5'-phosphate decarboxylase (234 aa).

Residues Asp11, Lys33, 60–69 (DLKFHDIPNT), Thr120, Arg181, Gln190, Gly210, and Arg211 each bind substrate. The active-site Proton donor is Lys62.

This sequence belongs to the OMP decarboxylase family. Type 1 subfamily. As to quaternary structure, homodimer.

The catalysed reaction is orotidine 5'-phosphate + H(+) = UMP + CO2. Its pathway is pyrimidine metabolism; UMP biosynthesis via de novo pathway; UMP from orotate: step 2/2. Functionally, catalyzes the decarboxylation of orotidine 5'-monophosphate (OMP) to uridine 5'-monophosphate (UMP). This chain is Orotidine 5'-phosphate decarboxylase, found in Aliivibrio fischeri (strain ATCC 700601 / ES114) (Vibrio fischeri).